We begin with the raw amino-acid sequence, 991 residues long: UvrABC system protein A (991 aa).

48–55 (GLSGSGKS) contributes to the ATP binding site. ABC transporter domains follow at residues 345 to 624 (WAKS…PKSL) and 644 to 972 (NHRR…KFLE). 676 to 683 (GVSGGGKS) lines the ATP pocket. A C4-type zinc finger spans residues 775–801 (CEACQGDGVIKIEMHFLPDVYVTCDVC).

The protein belongs to the ABC transporter superfamily. UvrA family. As to quaternary structure, forms a heterotetramer with UvrB during the search for lesions.

It localises to the cytoplasm. In terms of biological role, the UvrABC repair system catalyzes the recognition and processing of DNA lesions. UvrA is an ATPase and a DNA-binding protein. A damage recognition complex composed of 2 UvrA and 2 UvrB subunits scans DNA for abnormalities. When the presence of a lesion has been verified by UvrB, the UvrA molecules dissociate. This chain is UvrABC system protein A, found in Bradyrhizobium diazoefficiens (strain JCM 10833 / BCRC 13528 / IAM 13628 / NBRC 14792 / USDA 110).